The following is a 159-amino-acid chain: Late embryogenesis abundant protein 50 (159 aa).

SMP domains lie at 30 to 87 (TTLT…RNQK) and 96 to 151 (NLGD…YKLN).

It belongs to the LEA type SMP family.

It is found in the cytoplasm. The protein resides in the nucleus. In terms of biological role, LEA proteins are late embryonic proteins abundant in higher plant seed embryos. The function of those proteins is not known. The chain is Late embryogenesis abundant protein 50 from Arabidopsis thaliana (Mouse-ear cress).